Consider the following 539-residue polypeptide: 2-isopropylmalate synthase (539 aa).

In terms of domain architecture, Pyruvate carboxyltransferase spans 8-269 (VLIFDTTLRD…YFNPFFGRPP (262 aa)). Mn(2+)-binding residues include aspartate 17, histidine 208, histidine 210, and asparagine 244. Positions 408–539 (QLKLVQVSCG…DLAKVDKKGI (132 aa)) are regulatory domain.

This sequence belongs to the alpha-IPM synthase/homocitrate synthase family. LeuA type 1 subfamily. As to quaternary structure, homodimer. Mn(2+) serves as cofactor.

It localises to the cytoplasm. The enzyme catalyses 3-methyl-2-oxobutanoate + acetyl-CoA + H2O = (2S)-2-isopropylmalate + CoA + H(+). It participates in amino-acid biosynthesis; L-leucine biosynthesis; L-leucine from 3-methyl-2-oxobutanoate: step 1/4. Its function is as follows. Catalyzes the condensation of the acetyl group of acetyl-CoA with 3-methyl-2-oxobutanoate (2-ketoisovalerate) to form 3-carboxy-3-hydroxy-4-methylpentanoate (2-isopropylmalate). The polypeptide is 2-isopropylmalate synthase (Prochlorococcus marinus (strain NATL1A)).